Consider the following 267-residue polypeptide: Mannose-specific lectin 1 (267 aa).

The signal sequence occupies residues 1-26 (MAKLLLFLLPAILGLLVPPRSWSAVA). Bulb-type lectin domains are found at residues 29–134 (TNYL…PSVP) and 148–255 (NNLL…PQAK). Residues 54-58 (QDDCN), Y62, W66, Q67, 173-177 (QGDCN), Y181, and 185-188 (YGWQ) each bind beta-D-mannose. A Carbohydrate-binding motif 1 motif is present at residues 54–62 (QDDCNLVLY). Disulfide bonds link C57–C77 and C176–C198. Positions 173-181 (QGDCNLVLY) match the Carbohydrate-binding motif 2 motif.

In terms of assembly, forms heterotetramer of 2 chains 1 and 2 chains 2 arranged as a dimer of chain 1 and chain 2 heterodimers.

It is found in the secreted. Mannose-specific lectin. Shows agglutinating activity towards erythrocytes from rabbit. The chain is Mannose-specific lectin 1 from Colocasia esculenta (Wild taro).